Consider the following 173-residue polypeptide: Crossover junction endodeoxyribonuclease RuvC (173 aa).

Active-site residues include Asp8, Glu67, and Asp139. Mg(2+) contacts are provided by Asp8, Glu67, and Asp139.

The protein belongs to the RuvC family. As to quaternary structure, homodimer which binds Holliday junction (HJ) DNA. The HJ becomes 2-fold symmetrical on binding to RuvC with unstacked arms; it has a different conformation from HJ DNA in complex with RuvA. In the full resolvosome a probable DNA-RuvA(4)-RuvB(12)-RuvC(2) complex forms which resolves the HJ. The cofactor is Mg(2+).

Its subcellular location is the cytoplasm. The enzyme catalyses Endonucleolytic cleavage at a junction such as a reciprocal single-stranded crossover between two homologous DNA duplexes (Holliday junction).. Its function is as follows. The RuvA-RuvB-RuvC complex processes Holliday junction (HJ) DNA during genetic recombination and DNA repair. Endonuclease that resolves HJ intermediates. Cleaves cruciform DNA by making single-stranded nicks across the HJ at symmetrical positions within the homologous arms, yielding a 5'-phosphate and a 3'-hydroxyl group; requires a central core of homology in the junction. The consensus cleavage sequence is 5'-(A/T)TT(C/G)-3'. Cleavage occurs on the 3'-side of the TT dinucleotide at the point of strand exchange. HJ branch migration catalyzed by RuvA-RuvB allows RuvC to scan DNA until it finds its consensus sequence, where it cleaves and resolves the cruciform DNA. This is Crossover junction endodeoxyribonuclease RuvC from Shewanella frigidimarina (strain NCIMB 400).